The primary structure comprises 330 residues: Aspartate--ammonia ligase (330 aa).

The protein belongs to the class-II aminoacyl-tRNA synthetase family. AsnA subfamily.

The protein resides in the cytoplasm. The catalysed reaction is L-aspartate + NH4(+) + ATP = L-asparagine + AMP + diphosphate + H(+). Its pathway is amino-acid biosynthesis; L-asparagine biosynthesis; L-asparagine from L-aspartate (ammonia route): step 1/1. The protein is Aspartate--ammonia ligase of Streptococcus uberis (strain ATCC BAA-854 / 0140J).